A 264-amino-acid chain; its full sequence is MIVVKAGGRTLLNNMDEIVKSISRLEKAVFVHGGGDLVDEWERKMGMEPQFKVSASGIKFRYTDEKELEVFVAVLGGLLNKKIVASFASYGRGAVGLTGADGPSVIAERKKKVIVQEKVGERLVKRAIAGGYTGKIKEVKTDLIKALVERGLVPVVAPIALSPEGELLNVNGDQMAAELAKALSAEYLVLLTDVPGVLMDGKVVPEIKSSEAEEVAKKVGPGMNIKIIMAGRVASGGTKVVICDGTVPDPLKCLEERSGTWVVP.

Residues 34–35 (GG), Arg61, and Asn169 each bind substrate.

It belongs to the acetylglutamate kinase family. LysZ subfamily.

Its subcellular location is the cytoplasm. It carries out the reaction [amino-group carrier protein]-C-terminal-N-(1,4-dicarboxybutan-1-yl)-L-glutamine + ATP = [amino-group carrier protein]-C-terminal-N-(1-carboxy-5-phosphooxy-5-oxopentan-1-yl)-L-glutamine + ADP. The enzyme catalyses [amino-group carrier protein]-C-terminal-gamma-(L-glutamyl)-L-glutamate + ATP = [amino-group carrier protein]-C-terminal-gamma-(5-phospho-L-glutamyl)-L-glutamate + ADP. Its pathway is amino-acid biosynthesis; L-lysine biosynthesis via AAA pathway; L-lysine from L-alpha-aminoadipate (Thermus route): step 2/5. The protein operates within amino-acid biosynthesis; L-arginine biosynthesis. In terms of biological role, involved in both the arginine and lysine biosynthetic pathways. Phosphorylates the LysW-bound precursors glutamate (for arginine biosynthesis), respectively alpha-aminoadipate (for lysine biosynthesis). This Ignicoccus hospitalis (strain KIN4/I / DSM 18386 / JCM 14125) protein is Putative [LysW]-aminoadipate/[LysW]-glutamate kinase.